The primary structure comprises 205 residues: High frequency lysogenization protein HflD homolog (205 aa).

Belongs to the HflD family.

Its subcellular location is the cytoplasm. It localises to the cell inner membrane. This chain is High frequency lysogenization protein HflD homolog, found in Aliivibrio fischeri (strain MJ11) (Vibrio fischeri).